A 205-amino-acid polypeptide reads, in one-letter code: Holliday junction branch migration complex subunit RuvA (205 aa).

Positions 1-64 (MIGRLNGILV…EDAQLLFGFN (64 aa)) are domain I. The segment at 65–143 (NKVERALFRE…NWGNDLFTPF (79 aa)) is domain II. The tract at residues 144–156 (SDSAVIEPFSDAT) is flexible linker. Residues 157–205 (IANNAADDAVSALVSLGYKLPQAQKAVKSVSKPDMSTEVLIKESLKSML) form a domain III region.

It belongs to the RuvA family. In terms of assembly, homotetramer. Forms an RuvA(8)-RuvB(12)-Holliday junction (HJ) complex. HJ DNA is sandwiched between 2 RuvA tetramers; dsDNA enters through RuvA and exits via RuvB. An RuvB hexamer assembles on each DNA strand where it exits the tetramer. Each RuvB hexamer is contacted by two RuvA subunits (via domain III) on 2 adjacent RuvB subunits; this complex drives branch migration. In the full resolvosome a probable DNA-RuvA(4)-RuvB(12)-RuvC(2) complex forms which resolves the HJ.

The protein resides in the cytoplasm. The RuvA-RuvB-RuvC complex processes Holliday junction (HJ) DNA during genetic recombination and DNA repair, while the RuvA-RuvB complex plays an important role in the rescue of blocked DNA replication forks via replication fork reversal (RFR). RuvA specifically binds to HJ cruciform DNA, conferring on it an open structure. The RuvB hexamer acts as an ATP-dependent pump, pulling dsDNA into and through the RuvAB complex. HJ branch migration allows RuvC to scan DNA until it finds its consensus sequence, where it cleaves and resolves the cruciform DNA. The chain is Holliday junction branch migration complex subunit RuvA from Pseudoalteromonas translucida (strain TAC 125).